Here is a 109-residue protein sequence, read N- to C-terminus: Tektin-3 (109 aa).

The protein belongs to the tektin family. Microtubule inner protein component of sperm flagellar doublet microtubules. Interacts with TEKT1, TEKT2, TEKT4 and TEKT5. Interacts with CCDC38. N- and O-glycosylated. Post-translationally, may be proteolytically processed during the epididymal transit of spermatozoa. In terms of processing, ubiquitinated, leading to its degradation. Deubiquitinated by USP16, promoting its stability.

Its subcellular location is the cytoplasm. The protein localises to the cytoskeleton. It localises to the cilium axoneme. It is found in the flagellum axoneme. The protein resides in the cytoplasmic vesicle. Its subcellular location is the secretory vesicle. The protein localises to the acrosome outer membrane. Its function is as follows. Microtubule inner protein (MIP) part of the dynein-decorated doublet microtubules (DMTs) in cilia and flagellar axoneme. Forms filamentous polymers in the walls of ciliary and flagellar microtubules. Required for normal sperm mobility. This is Tektin-3 from Mesocricetus auratus (Golden hamster).